We begin with the raw amino-acid sequence, 637 residues long: Threonine--tRNA ligase (637 aa).

The TGS domain maps to 1–61 (MIKVTLKDGK…DKDCNLEILT (61 aa)). Positions 242–532 (DHRKIGKELD…LIEHYAGAFP (291 aa)) are catalytic. Cys333, His384, and His509 together coordinate Zn(2+).

The protein belongs to the class-II aminoacyl-tRNA synthetase family. Homodimer. Zn(2+) is required as a cofactor.

Its subcellular location is the cytoplasm. The enzyme catalyses tRNA(Thr) + L-threonine + ATP = L-threonyl-tRNA(Thr) + AMP + diphosphate + H(+). Its function is as follows. Catalyzes the attachment of threonine to tRNA(Thr) in a two-step reaction: L-threonine is first activated by ATP to form Thr-AMP and then transferred to the acceptor end of tRNA(Thr). Also edits incorrectly charged L-seryl-tRNA(Thr). This chain is Threonine--tRNA ligase, found in Clostridium acetobutylicum (strain ATCC 824 / DSM 792 / JCM 1419 / IAM 19013 / LMG 5710 / NBRC 13948 / NRRL B-527 / VKM B-1787 / 2291 / W).